A 101-amino-acid polypeptide reads, in one-letter code: MQLTGSIYPWFTAYALLKSTLMELINSFIPYKSQTGKAPKCLVPYWLSIRLSLLYFKLTEAISFTEKCEKYNISLFDSTFVFGYIVNCFFIIHLNTFLTSQ.

An N-terminal signal peptide occupies residues 1–27 (MQLTGSIYPWFTAYALLKSTLMELINS). 2 consecutive transmembrane segments (helical) span residues 42 to 64 (LVPYWLSIRLSLLYFKLTEAISF) and 79 to 98 (TFVFGYIVNCFFIIHLNTFL).

It is found in the cytoplasm. The protein localises to the nucleus membrane. This is an uncharacterized protein from Schizosaccharomyces pombe (strain 972 / ATCC 24843) (Fission yeast).